The chain runs to 123 residues: Diacylglycerol kinase (123 aa).

A helical membrane pass occupies residues 15–32 (ILNATGYSLAGFLAAFRG). Glu-33 lines the a divalent metal cation pocket. Helical transmembrane passes span 35–55 (AFRQLVLLNVVLIPVAFLLDV), 61–81 (ALMIAVCLLALIVELLNSAIE), and 102–122 (GSAAQFVALTVITVTWATILL). Glu-74 functions as the Proton acceptor in the catalytic mechanism. Glu-81 serves as a coordination point for a divalent metal cation.

This sequence belongs to the bacterial diacylglycerol kinase family. It depends on Mg(2+) as a cofactor.

Its subcellular location is the cell inner membrane. The catalysed reaction is a 1,2-diacyl-sn-glycerol + ATP = a 1,2-diacyl-sn-glycero-3-phosphate + ADP + H(+). Its function is as follows. Catalyzes the ATP-dependent phosphorylation of sn-l,2-diacylglycerol (DAG) to phosphatidic acid. Involved in the recycling of diacylglycerol produced as a by-product during membrane-derived oligosaccharide (MDO) biosynthesis. This Pseudomonas aeruginosa (strain ATCC 15692 / DSM 22644 / CIP 104116 / JCM 14847 / LMG 12228 / 1C / PRS 101 / PAO1) protein is Diacylglycerol kinase (dgkA).